Here is a 989-residue protein sequence, read N- to C-terminus: Clumping factor A (989 aa).

Residues 1 to 39 (MNMKKKEKHAIRKKSIGVASVLVGTLIGFGLLSSKEADA) form the signal peptide. The YSIRK-G/S signaling motif motif lies at 9 to 20 (HAIRKKSIGVAS). Disordered stretches follow at residues 34–205 (SKEA…VSQA) and 529–960 (FNNG…SEDE). A ligand binding A region region spans residues 40–542 (SENSVTQSDS…SGSGDGIDKP (503 aa)). Over residues 47-65 (SDSASNESKSNDSSSVSAA) the composition is skewed to low complexity. Residues 71–105 (TNVSDTKTSSNTNNGETSVAQNPAQQETTQSSSTN) are compositionally biased toward polar residues. 2 stretches are compositionally biased toward low complexity: residues 106–132 (ATTEETPVTGEATTTTTNQANTPATTQ) and 143–162 (NQTSNETTSNDTNTVSSVNS). A compositionally biased stretch (polar residues) spans 163–205 (PQNSTNAENVSTTQDTSTEATPSNNESAPQNTDASNKDVVSQA). Over residues 547 to 565 (QPDEPGEIEPIPEDSDSDP) the composition is skewed to acidic residues. Positions 566 to 598 (GSDSGSDSNSDSGSDSGSDSTSDSGSDSASDSD) are enriched in low complexity. Positions 599-917 (SASDSDSASD…DNDSDSDSNS (319 aa)) are enriched in acidic residues. A compositionally biased stretch (low complexity) spans 918–936 (DSESGSNNNVVPPNSPKNG). The segment covering 943–952 (NEAKDSKEPL) has biased composition (basic and acidic residues). The short motif at 952–956 (LPDTG) is the LPXTG sorting signal element. At Thr955 the chain carries Pentaglycyl murein peptidoglycan amidated threonine. A propeptide spans 956 to 989 (GSEDEANTSLIWGLLASLGSLLLFRRKKENKDKK) (removed by sortase).

This sequence belongs to the serine-aspartate repeat-containing protein (SDr) family.

It is found in the secreted. The protein resides in the cell wall. Its function is as follows. Cell surface-associated protein implicated in virulence. Promotes bacterial attachment exclusively to the gamma-chain of human fibrinogen. Induces formation of bacterial clumps, which diminish the ability of group IIA phospholipase A2 to cause bacterial phospholipid hydrolysis and killing. Significantly decreases macrophage phagocytosis possibly thanks to the clumps, clumped bacteria being too large to be phagocytosed. Dominant factor responsible for human platelet aggregation, which may be an important mechanism for initiating infective endocarditis. This is Clumping factor A (clfA) from Staphylococcus aureus (strain N315).